The primary structure comprises 427 residues: Serine hydroxymethyltransferase (427 aa).

(6S)-5,6,7,8-tetrahydrofolate contacts are provided by residues Leu-122 and 126 to 128; that span reads GHL. Lys-231 carries the N6-(pyridoxal phosphate)lysine modification. (6S)-5,6,7,8-tetrahydrofolate-binding positions include Glu-247 and 355–357; that span reads SPF.

It belongs to the SHMT family. As to quaternary structure, homodimer. Requires pyridoxal 5'-phosphate as cofactor.

Its subcellular location is the cytoplasm. It carries out the reaction (6R)-5,10-methylene-5,6,7,8-tetrahydrofolate + glycine + H2O = (6S)-5,6,7,8-tetrahydrofolate + L-serine. It functions in the pathway one-carbon metabolism; tetrahydrofolate interconversion. The protein operates within amino-acid biosynthesis; glycine biosynthesis; glycine from L-serine: step 1/1. Its function is as follows. Catalyzes the reversible interconversion of serine and glycine with tetrahydrofolate (THF) serving as the one-carbon carrier. This reaction serves as the major source of one-carbon groups required for the biosynthesis of purines, thymidylate, methionine, and other important biomolecules. Also exhibits THF-independent aldolase activity toward beta-hydroxyamino acids, producing glycine and aldehydes, via a retro-aldol mechanism. This chain is Serine hydroxymethyltransferase, found in Crocosphaera subtropica (strain ATCC 51142 / BH68) (Cyanothece sp. (strain ATCC 51142)).